The following is a 297-amino-acid chain: Homoserine kinase (297 aa).

82 to 92 (PVSRGLGSSAA) is a binding site for ATP.

It belongs to the GHMP kinase family. Homoserine kinase subfamily.

Its subcellular location is the cytoplasm. The catalysed reaction is L-homoserine + ATP = O-phospho-L-homoserine + ADP + H(+). It functions in the pathway amino-acid biosynthesis; L-threonine biosynthesis; L-threonine from L-aspartate: step 4/5. Functionally, catalyzes the ATP-dependent phosphorylation of L-homoserine to L-homoserine phosphate. The protein is Homoserine kinase of Clostridium botulinum (strain Langeland / NCTC 10281 / Type F).